The sequence spans 88 residues: Small ribosomal subunit protein uS15c (88 aa).

This sequence belongs to the universal ribosomal protein uS15 family. In terms of assembly, part of the 30S ribosomal subunit.

It localises to the plastid. The protein localises to the chloroplast. In Draba nemorosa (Woodland whitlowgrass), this protein is Small ribosomal subunit protein uS15c (rps15).